The chain runs to 450 residues: Vacuolar cation/proton exchanger 1c (450 aa).

Residues 1–73 (MAPPESSHHH…LLGGPAAQLQ (73 aa)) are Cytoplasmic-facing. The segment at 28–52 (AAEEEEKKEAAAWTPSSSSSMTGRK) is disordered. A helical membrane pass occupies residues 74-94 (EVLLGTKLYPLFSAVPLAVAA). At 95-101 (ESLRLGR) the chain is on the extracellular side. Residues 102–122 (VWVFAFSLIGLAPLAERVSFL) form a helical membrane-spanning segment. Topologically, residues 123-134 (SEHIANTVGPTA) are cytoplasmic. Residues 135–155 (GGIMNATCGNVPELIIALFAL) traverse the membrane as a helical segment. Positions 143-178 (GNVPELIIALFALHKNKMEILKWSLLGSILSNLLLV) are cation selection. The Extracellular segment spans residues 156-170 (HKNKMEILKWSLLGS). The chain crosses the membrane as a helical span at residues 171 to 191 (ILSNLLLVLGSSLLFGGIVNI). The Cytoplasmic segment spans residues 192–201 (GKERPLDKRQ). A helical membrane pass occupies residues 202–222 (ADVSIGLLLLGVLCHIATLVS). Over 223–239 (KYTSSTGDSINSSSVMQ) the chain is Extracellular. The chain crosses the membrane as a helical span at residues 240-260 (LSRSCAIVMLIAYFGSLMFQL). The Cytoplasmic segment spans residues 261–287 (KTHRQIFELEEDSSDSSSSEDDATDKS). Residues 288 to 308 (VIGFASAMVWLIGMAVVTAML) form a helical membrane-spanning segment. At 309 to 331 (SSYVVTTIEEASESMGIPVRFIS) the chain is on the extracellular side. Residues 332–352 (IILLPIVGNAAEHAGAIIFAF) form a helical membrane-spanning segment. Residues 339 to 374 (GNAAEHAGAIIFAFKNKIDISLGITLGSATQISMLV) form a cation selection region. At 353–360 (KNKIDISL) the chain is on the cytoplasmic side. Residues 361–381 (GITLGSATQISMLVVPVILIV) form a helical membrane-spanning segment. At 382-385 (SWVN) the chain is on the extracellular side. A helical membrane pass occupies residues 386–406 (AIPMDLDFNLLETGSLAMAVI). The Cytoplasmic portion of the chain corresponds to 407–424 (TTAFTLQDDKWHYLKGLN). The chain crosses the membrane as a helical span at residues 425-445 (LVFSYIVIAVCFFVMKALPTL). The Extracellular portion of the chain corresponds to 446 to 450 (KKEDD).

It belongs to the Ca(2+):cation antiporter (CaCA) (TC 2.A.19) family. Cation/proton exchanger (CAX) subfamily. Expressed in leaf blades.

Its subcellular location is the vacuole membrane. Functionally, vacuolar cation/proton exchanger (CAX). Translocates Ca(2+) and other metal ions into vacuoles using the proton gradient formed by H(+)-ATPase and H(+)-pyrophosphatase. The polypeptide is Vacuolar cation/proton exchanger 1c (CAX1c) (Oryza sativa subsp. japonica (Rice)).